We begin with the raw amino-acid sequence, 1251 residues long: ATP-dependent helicase/nuclease subunit A (1251 aa).

A UvrD-like helicase ATP-binding domain is found at threonine 5–arginine 481. Alanine 26–threonine 33 lines the ATP pocket. The 299-residue stretch at threonine 526 to glycine 824 folds into the UvrD-like helicase C-terminal domain. Residues asparagine 544–glutamate 565 form a disordered region.

This sequence belongs to the helicase family. AddA subfamily. In terms of assembly, heterodimer of AddA and AddB/RexB. Mg(2+) serves as cofactor.

It catalyses the reaction Couples ATP hydrolysis with the unwinding of duplex DNA by translocating in the 3'-5' direction.. The enzyme catalyses ATP + H2O = ADP + phosphate + H(+). The heterodimer acts as both an ATP-dependent DNA helicase and an ATP-dependent, dual-direction single-stranded exonuclease. Recognizes the chi site generating a DNA molecule suitable for the initiation of homologous recombination. The AddA nuclease domain is required for chi fragment generation; this subunit has the helicase and 3' -&gt; 5' nuclease activities. The polypeptide is ATP-dependent helicase/nuclease subunit A (Acetivibrio thermocellus (strain ATCC 27405 / DSM 1237 / JCM 9322 / NBRC 103400 / NCIMB 10682 / NRRL B-4536 / VPI 7372) (Clostridium thermocellum)).